A 548-amino-acid polypeptide reads, in one-letter code: Poly(ADP-ribose) glycohydrolase 1 (548 aa).

Belongs to the poly(ADP-ribose) glycohydrolase family.

The catalysed reaction is [(1''-&gt;2')-ADP-alpha-D-ribose](n) + H2O = [(1''-&gt;2')-ADP-alpha-D-ribose](n-1) + ADP-D-ribose. Poly(ADP-ribose) synthesized after DNA damage is only present transiently and is rapidly degraded by poly(ADP-ribose) glycohydrolase. Involved in establishing period length of the circadian oscillator. May regulate post-translational poly(ADP-ribosyl)ation of an oscillator component. The chain is Poly(ADP-ribose) glycohydrolase 1 (PARG1) from Arabidopsis thaliana (Mouse-ear cress).